A 185-amino-acid chain; its full sequence is Calcium-binding protein K-like (185 aa).

2 EF-hand domains span residues 60-95 (WDEA…MTRA) and 96-131 (PTTD…VVVC). The Ca(2+) site is built by Asp-73, Asp-75, Asn-77, Glu-84, Asp-109, Asp-111, Ser-113, Tyr-115, and Glu-120.

Belongs to the recoverin family.

The chain is Calcium-binding protein K-like from Dictyostelium discoideum (Social amoeba).